We begin with the raw amino-acid sequence, 183 residues long: Ribonuclease H (183 aa).

The region spanning 2 to 151 (SQARFIAFSD…VDQLAQAAAR (150 aa)) is the RNase H type-1 domain. Residues aspartate 11, glutamate 57, aspartate 79, and aspartate 143 each coordinate Mg(2+).

This sequence belongs to the RNase H family. Monomer. Requires Mg(2+) as cofactor.

It is found in the cytoplasm. The catalysed reaction is Endonucleolytic cleavage to 5'-phosphomonoester.. Endonuclease that specifically degrades the RNA of RNA-DNA hybrids. The protein is Ribonuclease H of Anaeromyxobacter sp. (strain K).